A 67-amino-acid chain; its full sequence is Large ribosomal subunit protein bL35 (67 aa).

The protein belongs to the bacterial ribosomal protein bL35 family.

The protein is Large ribosomal subunit protein bL35 of Zymomonas mobilis subsp. mobilis (strain ATCC 31821 / ZM4 / CP4).